Reading from the N-terminus, the 257-residue chain is Imidazole glycerol phosphate synthase subunit HisF (257 aa).

Catalysis depends on residues D12 and D131.

Belongs to the HisA/HisF family. Heterodimer of HisH and HisF.

It is found in the cytoplasm. It catalyses the reaction 5-[(5-phospho-1-deoxy-D-ribulos-1-ylimino)methylamino]-1-(5-phospho-beta-D-ribosyl)imidazole-4-carboxamide + L-glutamine = D-erythro-1-(imidazol-4-yl)glycerol 3-phosphate + 5-amino-1-(5-phospho-beta-D-ribosyl)imidazole-4-carboxamide + L-glutamate + H(+). The protein operates within amino-acid biosynthesis; L-histidine biosynthesis; L-histidine from 5-phospho-alpha-D-ribose 1-diphosphate: step 5/9. In terms of biological role, IGPS catalyzes the conversion of PRFAR and glutamine to IGP, AICAR and glutamate. The HisF subunit catalyzes the cyclization activity that produces IGP and AICAR from PRFAR using the ammonia provided by the HisH subunit. The chain is Imidazole glycerol phosphate synthase subunit HisF from Marinobacter nauticus (strain ATCC 700491 / DSM 11845 / VT8) (Marinobacter aquaeolei).